The sequence spans 194 residues: Adenylate kinase (194 aa).

10 to 15 (GAGKGT) is an ATP binding site. The tract at residues 30–59 (STGDMLRAAVKAETEIGKKAKAVMDAGELV) is NMP. AMP-binding positions include Thr-31, Arg-36, 57–59 (ELV), 85–88 (GYPR), and Gln-92. The tract at residues 126–142 (KRAEDAQAAGQPVRRDD) is LID. Position 127 (Arg-127) interacts with ATP. The AMP site is built by Arg-139 and Arg-150. Ala-178 serves as a coordination point for ATP.

The protein belongs to the adenylate kinase family. In terms of assembly, monomer.

The protein resides in the cytoplasm. The enzyme catalyses AMP + ATP = 2 ADP. The protein operates within purine metabolism; AMP biosynthesis via salvage pathway; AMP from ADP: step 1/1. Catalyzes the reversible transfer of the terminal phosphate group between ATP and AMP. Plays an important role in cellular energy homeostasis and in adenine nucleotide metabolism. The polypeptide is Adenylate kinase (Chelativorans sp. (strain BNC1)).